The sequence spans 225 residues: Phosphoribosyltransferase domain-containing protein 1 (225 aa).

An N-acetylalanine modification is found at Ala2. Residues Glu141 and Asp142 each contribute to the Mg(2+) site. Residues 141–149 (EDVVGTGRT), Lys173, 194–195 (FV), and Asp201 contribute to the GMP site. A Mg(2+)-binding site is contributed by Asp201.

This sequence belongs to the purine/pyrimidine phosphoribosyltransferase family. Homodimer.

Functionally, has low, barely detectable phosphoribosyltransferase activity (in vitro). Binds GMP, IMP and alpha-D-5-phosphoribosyl 1-pyrophosphate (PRPP). Is not expected to contribute to purine metabolism or GMP salvage. The sequence is that of Phosphoribosyltransferase domain-containing protein 1 (PRTFDC1) from Homo sapiens (Human).